Here is a 383-residue protein sequence, read N- to C-terminus: Acetylornithine deacetylase (383 aa).

H80 contacts Zn(2+). D82 is a catalytic residue. Residue D112 participates in Zn(2+) binding. E144 is an active-site residue. E145, E169, and H355 together coordinate Zn(2+).

Belongs to the peptidase M20A family. ArgE subfamily. Homodimer. Requires Zn(2+) as cofactor. Co(2+) serves as cofactor. The cofactor is glutathione.

The protein resides in the cytoplasm. The enzyme catalyses N(2)-acetyl-L-ornithine + H2O = L-ornithine + acetate. Its pathway is amino-acid biosynthesis; L-arginine biosynthesis; L-ornithine from N(2)-acetyl-L-ornithine (linear): step 1/1. Its function is as follows. Catalyzes the hydrolysis of the amide bond of N(2)-acetylated L-amino acids. Cleaves the acetyl group from N-acetyl-L-ornithine to form L-ornithine, an intermediate in L-arginine biosynthesis pathway, and a branchpoint in the synthesis of polyamines. In Escherichia coli O45:K1 (strain S88 / ExPEC), this protein is Acetylornithine deacetylase.